The chain runs to 296 residues: Cytidine deaminase (296 aa).

CMP/dCMP-type deaminase domains lie at 47 to 167 and 186 to 296; these read ELNE…FGPS and DSND…VEPE. Substrate is bound at residue 88-90; that stretch reads NIE. Residue H101 coordinates Zn(2+). E103 serves as the catalytic Proton donor. Zn(2+) contacts are provided by C128 and C131.

Belongs to the cytidine and deoxycytidylate deaminase family. As to quaternary structure, homodimer. Requires Zn(2+) as cofactor.

It carries out the reaction cytidine + H2O + H(+) = uridine + NH4(+). The enzyme catalyses 2'-deoxycytidine + H2O + H(+) = 2'-deoxyuridine + NH4(+). Functionally, this enzyme scavenges exogenous and endogenous cytidine and 2'-deoxycytidine for UMP synthesis. This is Cytidine deaminase from Shewanella halifaxensis (strain HAW-EB4).